Consider the following 277-residue polypeptide: Large ribosomal subunit protein uL2 (277 aa).

The segment at 219–277 is disordered; it reads TVRGSVMNPNDHPHGGGEGRAPIGRKSPMSPWGKPTLGFKTRKKKNKSDKFIVRRRKNK. Over residues 258 to 277 the composition is skewed to basic residues; it reads KTRKKKNKSDKFIVRRRKNK.

This sequence belongs to the universal ribosomal protein uL2 family. Part of the 50S ribosomal subunit. Forms a bridge to the 30S subunit in the 70S ribosome.

In terms of biological role, one of the primary rRNA binding proteins. Required for association of the 30S and 50S subunits to form the 70S ribosome, for tRNA binding and peptide bond formation. It has been suggested to have peptidyltransferase activity; this is somewhat controversial. Makes several contacts with the 16S rRNA in the 70S ribosome. The polypeptide is Large ribosomal subunit protein uL2 (Bacillus subtilis (strain 168)).